Reading from the N-terminus, the 370-residue chain is Mitochondrial distribution and morphology protein 10 (370 aa).

The protein belongs to the MDM10 family. Component of the ER-mitochondria encounter structure (ERMES) or MDM complex, composed of mmm1, mdm10, mdm12 and mdm34. Associates with the mitochondrial outer membrane sorting assembly machinery SAM(core) complex.

Its subcellular location is the mitochondrion outer membrane. Functionally, component of the ERMES/MDM complex, which serves as a molecular tether to connect the endoplasmic reticulum and mitochondria. Components of this complex are involved in the control of mitochondrial shape and protein biogenesis and may function in phospholipid exchange. mdm10 is involved in the late assembly steps of the general translocase of the mitochondrial outer membrane (TOM complex). Functions in the tom40-specific route of the assembly of outer membrane beta-barrel proteins, including the association of tom40 with the receptor tom22 and small TOM proteins. Can associate with the SAM(core) complex as well as the mdm12-mmm1 complex, both involved in late steps of the major beta-barrel assembly pathway, that is responsible for biogenesis of all outer membrane beta-barrel proteins. May act as a switch that shuttles between both complexes and channels precursor proteins into the tom40-specific pathway. Plays a role in mitochondrial morphology and in the inheritance of mitochondria. This is Mitochondrial distribution and morphology protein 10 (mdm10) from Schizosaccharomyces pombe (strain 972 / ATCC 24843) (Fission yeast).